The following is a 585-amino-acid chain: UvrABC system protein C (585 aa).

Residues 15 to 90 (AEPGVYQFLE…IKRHQPRYNV (76 aa)) enclose the GIY-YIG domain. Positions 198–233 (GILADPLRQEMQAAATAEEFERAANIRDRLAVIESF) constitute a UVR domain.

Belongs to the UvrC family. In terms of assembly, interacts with UvrB in an incision complex.

The protein localises to the cytoplasm. In terms of biological role, the UvrABC repair system catalyzes the recognition and processing of DNA lesions. UvrC both incises the 5' and 3' sides of the lesion. The N-terminal half is responsible for the 3' incision and the C-terminal half is responsible for the 5' incision. The protein is UvrABC system protein C of Haloquadratum walsbyi (strain DSM 16790 / HBSQ001).